Consider the following 192-residue polypeptide: Probable GTP-binding protein EngB (192 aa).

In terms of domain architecture, EngB-type G spans Gln-22–Gly-192. Residues Gly-30 to Ser-37, Gly-57 to Leu-61, Asp-75 to Gly-78, Thr-142 to Asp-145, and Tyr-172 to Ala-174 contribute to the GTP site. The Mg(2+) site is built by Ser-37 and Thr-59.

The protein belongs to the TRAFAC class TrmE-Era-EngA-EngB-Septin-like GTPase superfamily. EngB GTPase family. The cofactor is Mg(2+).

Its function is as follows. Necessary for normal cell division and for the maintenance of normal septation. This chain is Probable GTP-binding protein EngB, found in Chlorobium phaeobacteroides (strain BS1).